A 338-amino-acid polypeptide reads, in one-letter code: Fructose-1,6-bisphosphatase 1 (338 aa).

Position 2 is an N-acetylthreonine (T2). Residues 18-22 (VMEEG) and 28-32 (TGEMT) each bind AMP. 2 residues coordinate Mg(2+): D69 and E98. 113-114 (KY) provides a ligand contact to AMP. Residues D119, L121, and D122 each contribute to the Mg(2+) site. 122–125 (DGSS) lines the substrate pocket. R141 is an AMP binding site. K151 is modified (N6-succinyllysine). A Phosphoserine; by PKA modification is found at S208. Substrate is bound by residues 213–216 (NEGY), 244–249 (RYVGSM), Y265, and 275–277 (KLR). Phosphotyrosine is present on residues Y216, Y245, and Y265. E281 serves as a coordination point for Mg(2+).

The protein belongs to the FBPase class 1 family. In terms of assembly, homotetramer. The cofactor is Mg(2+).

The enzyme catalyses beta-D-fructose 1,6-bisphosphate + H2O = beta-D-fructose 6-phosphate + phosphate. The protein operates within carbohydrate biosynthesis; gluconeogenesis. With respect to regulation, subject to complex allosteric regulation. The enzyme can assume an active R-state, or an inactive T-state. Intermediate conformations may exist. AMP acts as an allosteric inhibitor. AMP binding affects the turnover of bound substrate and not the affinity for substrate. Fructose 2,6-bisphosphate acts as a competitive inhibitor. Fructose 2,6-bisphosphate and AMP have synergistic effects. In terms of biological role, catalyzes the hydrolysis of fructose 1,6-bisphosphate to fructose 6-phosphate in the presence of divalent cations, acting as a rate-limiting enzyme in gluconeogenesis. Plays a role in regulating glucose sensing and insulin secretion of pancreatic beta-cells. Appears to modulate glycerol gluconeogenesis in liver. Important regulator of appetite and adiposity; increased expression of the protein in liver after nutrient excess increases circulating satiety hormones and reduces appetite-stimulating neuropeptides and thus seems to provide a feedback mechanism to limit weight gain. The polypeptide is Fructose-1,6-bisphosphatase 1 (FBP1) (Sus scrofa (Pig)).